A 233-amino-acid chain; its full sequence is Ion-translocating oxidoreductase complex subunit E (233 aa).

6 consecutive transmembrane segments (helical) span residues 18–38 (ALVQ…ATNA), 39–59 (LGLG…VSAL), 69–89 (IPIY…LINA), 92–112 (FGLY…CIVI), 128–148 (ALDG…LGAL), and 182–202 (PFLL…LLAG).

The protein belongs to the NqrDE/RnfAE family. The complex is composed of six subunits: RnfA, RnfB, RnfC, RnfD, RnfE and RnfG.

It localises to the cell inner membrane. Part of a membrane-bound complex that couples electron transfer with translocation of ions across the membrane. The sequence is that of Ion-translocating oxidoreductase complex subunit E from Yersinia pestis bv. Antiqua (strain Angola).